The following is a 729-amino-acid chain: DNA topoisomerase 3 (729 aa).

One can recognise a Toprim domain in the interval 3 to 136 (KKAVLAEKPS…VKRLWISSVT (134 aa)). Mg(2+)-binding residues include glutamate 9 and aspartate 105. Residues 153–590 (YETLYAAAAA…EMKEYAKAVV (438 aa)) enclose the Topo IA-type catalytic domain. The interval 187-192 (SCGRVQ) is interaction with DNA. Tyrosine 311 (O-(5'-phospho-DNA)-tyrosine intermediate) is an active-site residue. The disordered stretch occupies residues 680-708 (FEQRRKQNKHKNVSKREVQSYMKKQNKQD).

The protein belongs to the type IA topoisomerase family. The cofactor is Mg(2+).

The catalysed reaction is ATP-independent breakage of single-stranded DNA, followed by passage and rejoining.. Functionally, releases the supercoiling and torsional tension of DNA, which is introduced during the DNA replication and transcription, by transiently cleaving and rejoining one strand of the DNA duplex. Introduces a single-strand break via transesterification at a target site in duplex DNA. The scissile phosphodiester is attacked by the catalytic tyrosine of the enzyme, resulting in the formation of a DNA-(5'-phosphotyrosyl)-enzyme intermediate and the expulsion of a 3'-OH DNA strand. The free DNA strand then undergoes passage around the unbroken strand, thus removing DNA supercoils. Finally, in the religation step, the DNA 3'-OH attacks the covalent intermediate to expel the active-site tyrosine and restore the DNA phosphodiester backbone. The chain is DNA topoisomerase 3 from Shouchella clausii (strain KSM-K16) (Alkalihalobacillus clausii).